Here is a 686-residue protein sequence, read N- to C-terminus: Methionine--tRNA ligase (686 aa).

The 'HIGH' region motif lies at 13–23; that stretch reads PYANGQIHIGH. Zn(2+)-binding residues include Cys144, Cys147, Cys157, and Cys160. Residues 335–339 carry the 'KMSKS' region motif; the sequence is KMSKS. Lys338 lines the ATP pocket. Positions 580 to 686 constitute a tRNA-binding domain; that stretch reads DFAKVDLRVA…EGAVPGMRIG (107 aa).

The protein belongs to the class-I aminoacyl-tRNA synthetase family. MetG type 1 subfamily. As to quaternary structure, homodimer. Requires Zn(2+) as cofactor.

It is found in the cytoplasm. It carries out the reaction tRNA(Met) + L-methionine + ATP = L-methionyl-tRNA(Met) + AMP + diphosphate. Its function is as follows. Is required not only for elongation of protein synthesis but also for the initiation of all mRNA translation through initiator tRNA(fMet) aminoacylation. This is Methionine--tRNA ligase from Cupriavidus necator (strain ATCC 17699 / DSM 428 / KCTC 22496 / NCIMB 10442 / H16 / Stanier 337) (Ralstonia eutropha).